We begin with the raw amino-acid sequence, 586 residues long: BTB/POZ domain and ankyrin repeat-containing protein NPR1 (586 aa).

The region spanning 63–139 (SDADIVVEGI…VYTGKLKPSP (77 aa)) is the BTB domain. The C2HC NPR-type zinc finger occupies 142 to 156 (VSTCVHNVCAHDACR). The Zn(2+) site is built by cysteine 145, cysteine 150, histidine 152, and cysteine 155. ANK repeat units lie at residues 266–296 (KRIR…TLDE), 298–325 (NALH…DVNL), and 329–358 (RGYT…RASE). The segment at 388–522 (EANKDRICID…LDKFIDDDLP (135 aa)) is salicylic acid-binding core (SBC). Arginine 433 is a salicylate binding site. The tract at residues 561–586 (NLSGLSSSSSTTSPEKIGANQKVREP) is disordered. The segment covering 562–573 (LSGLSSSSSTTS) has biased composition (low complexity).

Belongs to the plant 'ANKYRIN-BTB/POZ' family. 'NPR1-like' subfamily. In terms of tissue distribution, highly expressed in leaves. Expressed at low levels in roots and stems.

It is found in the cytoplasm. It localises to the nucleus. Its subcellular location is the nuclear body. It functions in the pathway protein modification; protein ubiquitination. Salicylic acid (SA)-binding substrate-specific adapter of an E3 ubiquitin-protein ligase complex (CUL3-RBX1-BTB) which mediates the ubiquitination and subsequent proteasomal degradation of target proteins. Transcription cofactor that represses gene expression in the absence of salicylic acid (SA), when attached to negative cis-elements (W-box) with WRKY transcription factors, but stimulates gene expression upon activation by SA, when sumoylated and attached to positive cis-elements (as-1) with TGA transcription factors, thus confering immunity through a series of gene regulations ending in a significant increase in antimicrobial and defense genes expression. Probable component of the salicylic acid (SA) defense signaling pathway and pathogen-induced systemic acquired resistance (SAR). May be involved in disease resistance against fungal pathogens. May be involved in tolerance to salt and osmotic stresses. The protein is BTB/POZ domain and ankyrin repeat-containing protein NPR1 of Malus hupehensis (Chinese crab apple).